We begin with the raw amino-acid sequence, 251 residues long: Retinoic acid early-inducible protein 1-epsilon (251 aa).

A signal peptide spans 1-28 (MAKAAVTKRHHFMIQKLLILLSYGYTNG). C37 and C56 form a disulfide bridge. N-linked (GlcNAc...) asparagine glycans are attached at residues N38, N70, N83, N141, and N154. C88 and C188 are disulfide-bonded. A disordered region spans residues 196-228 (LKQSKEKPRSTSRSPSITQLTSTSPLPPPSHST). A compositionally biased stretch (low complexity) spans 209-219 (SPSITQLTSTS). The GPI-anchor amidated serine moiety is linked to residue S225. The propeptide at 226–251 (HSTSKKGFISVGLIFISLLFAFAFAM) is removed in mature form.

This sequence belongs to the NKG2D ligand family. In terms of processing, glycosylated.

The protein localises to the cell membrane. In terms of biological role, acts as a ligand for KLRK1. In Mus musculus (Mouse), this protein is Retinoic acid early-inducible protein 1-epsilon (Raet1e).